A 301-amino-acid chain; its full sequence is MLIHPNFDPVAIHLGPLAVRWYGLMYLVAFIAAIVVGRLRLRLPYVAAQGWTAKDIDDMLFYGVLGTILGGRLGYVLFYKASFYFAHPLDIFKVWEGGMSFHGGFLGVTLAMVLFAYQRKRSWLQVTDFVAPMVPTGLAAGRLGNFINGELWGRVTDPSAPWAMLFPGAAPDDAAWLAAHPQLAAQWHLNEVFAQYHMLPRHPSELYEIALEGVALFFVLFFFSRKPKPMGAISAVFLIGYGLARFTVEFAREPDDFLGLLAMGLSMGQWLSLPMILVGIGLLVWSYRRARREPAQAVSAS.

The next 3 helical transmembrane spans lie at 17-37, 59-79, and 97-117; these read LAVRWYGLMYLVAFIAAIVVG, MLFYGVLGTILGGRLGYVLFY, and GGMSFHGGFLGVTLAMVLFAY. A 1,2-diacyl-sn-glycero-3-phospho-(1'-sn-glycerol) is bound at residue Arg142. Helical transmembrane passes span 230–250 and 265–285; these read MGAISAVFLIGYGLARFTVEF and LSMGQWLSLPMILVGIGLLVW.

The protein belongs to the Lgt family.

It is found in the cell inner membrane. The enzyme catalyses L-cysteinyl-[prolipoprotein] + a 1,2-diacyl-sn-glycero-3-phospho-(1'-sn-glycerol) = an S-1,2-diacyl-sn-glyceryl-L-cysteinyl-[prolipoprotein] + sn-glycerol 1-phosphate + H(+). The protein operates within protein modification; lipoprotein biosynthesis (diacylglyceryl transfer). Its function is as follows. Catalyzes the transfer of the diacylglyceryl group from phosphatidylglycerol to the sulfhydryl group of the N-terminal cysteine of a prolipoprotein, the first step in the formation of mature lipoproteins. This chain is Phosphatidylglycerol--prolipoprotein diacylglyceryl transferase, found in Paraburkholderia xenovorans (strain LB400).